A 1077-amino-acid chain; its full sequence is Disheveled-associated activator of morphogenesis 1 (1077 aa).

Ser-34 is subject to Phosphoserine. Residues 45–420 form the GBD/FH3 domain; that stretch reads LPMPPVEELD…QIVIQNDKGQ (376 aa). Residues 437–526 adopt a coiled-coil conformation; the sequence is RMLVNENEVK…ELNRRAVCAA (90 aa). 2 disordered regions span residues 457–478 and 526–596; these read KEHN…AKTQ and AVPG…PVSL. Residues 528–599 enclose the FH1 domain; sequence PGGPSPGAPG…PGAPVSLTLK (72 aa). Pro residues-rich tracts occupy residues 530–539 and 549–592; these read GPSPGAPGGP and LPPP…PPGA. Positions 600–1008 constitute an FH2 domain; that stretch reads KKNIPQPTNA…EERRARLEAQ (409 aa). The tract at residues 693–702 is actin-binding; that stretch reads QNCNILLSRL. Over residues 1007–1026 the composition is skewed to basic and acidic residues; that stretch reads AQLKEQRERERKVRKAKESS. Disordered regions lie at residues 1007–1033 and 1056–1077; these read AQLK…GEFD and RKRI…KLNF. Phosphoserine is present on residues Ser-1026 and Ser-1029. The DAD domain maps to 1026–1057; it reads SEESGEFDDLVSALRSGEVFDKDLSKLKRNRK. Residues 1066-1077 show a composition bias toward basic and acidic residues; the sequence is SSRERPITKLNF.

It belongs to the formin homology family. In terms of assembly, interacts with CIP4, FNBP1 and FNBP1L. Interacts with the SH3 domains of Abl, BTK, endophilin, spectrin and SRC. Binds specifically to GTP-bound CDC42 and RHOA. Interacts with INTU; INTU mediates the indirect interaction between DAAM1 and NPHP4. Interacts (via coiled coil domain) with KANK1 (via coiled coil domain). In terms of tissue distribution, in early embryogenesis, expressed in embryonic and extraembryonic ectoderm. In later stages of gastrulation, expressed also in somites and ribs and posterior vertebrae of developing skeletal system. During organogenesis, expressed in CNS, PNS, stomach, liver and limb bud.

It localises to the cytoplasm. Its subcellular location is the cytoskeleton. The protein resides in the cilium basal body. Its function is as follows. Binds to disheveled (Dvl) and Rho, and mediates Wnt-induced Dvl-Rho complex formation. May play a role as a scaffolding protein to recruit Rho-GDP and Rho-GEF, thereby enhancing Rho-GTP formation. Can direct nucleation and elongation of new actin filaments. Involved in building functional cilia. Involved in the organization of the subapical actin network in multiciliated epithelial cells. Together with DAAM2, required for myocardial maturation and sarcomere assembly. During cell division, may regulate RHOA activation that signals spindle orientation and chromosomal segregation. The protein is Disheveled-associated activator of morphogenesis 1 (Daam1) of Mus musculus (Mouse).